The following is a 285-amino-acid chain: uncharacterized protein (285 aa).

Belongs to the methyltransferase superfamily.

This is an uncharacterized protein from Mycobacterium tuberculosis (strain CDC 1551 / Oshkosh).